The following is a 630-amino-acid chain: Golgi apyrase (630 aa).

At 1-500 the chain is on the lumenal side; it reads MLIENTNDRF…RKQSSSLSNK (500 aa). The active-site Proton acceptor is the E152. A helical membrane pass occupies residues 501–517; sequence GFLMWFAIICCIFYLIF. Residues 518 to 630 are Cytoplasmic-facing; that stretch reads HRSHIIRRRF…SKFKDSRLYD (113 aa). The interval 586–606 is disordered; that stretch reads SSATMQREHEPQRTASQSANL.

Belongs to the GDA1/CD39 NTPase family. In terms of assembly, interacts with activator subunit VMA13 of vacuolar H(+)-ATPase. Interacts with CDC55; this interaction is disrupted by adenovirus E4orf4, which remains associated with both YND1 and CDC55. Requires Ca(2+) as cofactor. It depends on Mg(2+) as a cofactor. Mn(2+) is required as a cofactor.

Its subcellular location is the golgi apparatus. The protein resides in the membrane. The catalysed reaction is a ribonucleoside 5'-triphosphate + 2 H2O = a ribonucleoside 5'-phosphate + 2 phosphate + 2 H(+). It functions in the pathway protein modification; protein glycosylation. With respect to regulation, activity is inhibited both by interaction with VMA13 and by V-ATPase acidification of the lumen. The activity of VMA13 is not required for YND1 inhibition. Its function is as follows. Catalyzes the hydrolysis of phosphoanhydride bonds of nucleoside tri- and di-phosphates. Has equal high activity toward ADP/ATP, GDP/GTP, and UDP/UTP and approximately 50% less toward CDP/CTP and thiamine pyrophosphate. Has no activity toward GMP. Required for Golgi glycosylation and cell wall integrity. Together with CDC55, required for adenovirus E4orf4 (early region 4 open reading frame 4) induced toxicity, the apyrase activity is not required for this function. Plays a role in sphingolipid synthesis. This Saccharomyces cerevisiae (strain ATCC 204508 / S288c) (Baker's yeast) protein is Golgi apyrase (YND1).